Reading from the N-terminus, the 332-residue chain is UPF0194 membrane protein YbhG (332 aa).

The first 16 residues, 1–16 (MMKKPVVIGLAVVVLA), serve as a signal peptide directing secretion. Residues 108–209 (EEIAQAAAAV…LNLQDSTLIA (102 aa)) adopt a coiled-coil conformation.

The protein belongs to the UPF0194 family.

It is found in the periplasm. This chain is UPF0194 membrane protein YbhG, found in Shigella boydii serotype 4 (strain Sb227).